Consider the following 1140-residue polypeptide: uncharacterized protein (1140 aa).

Disordered regions lie at residues 1–49 (MGSS…TSPE), 97–243 (SSDI…STIS), 280–427 (TSSS…KSSV), 512–541 (ASST…DLSK), 702–747 (FSTP…STAS), 916–1059 (CPEK…PIGR), and 1080–1103 (LSSS…GTSS). The segment covering 105–129 (VNDVESSTSGPSNSYSALSSTNAQL) has biased composition (polar residues). 3 stretches are compositionally biased toward low complexity: residues 130–154 (SSST…TSSS), 172–214 (TTAS…TTSD), and 221–243 (SSST…STIS). Positions 516 to 528 (LGSKVSSSNSRMA) are enriched in polar residues. Low complexity-rich tracts occupy residues 529–541 (TSKT…DLSK) and 703–718 (STPE…VTSE). Residues 719–733 (APSTVSSMTTSAPFI) show a composition bias toward polar residues. Residues 734–747 (NNSTSARPSPSTAS) show a composition bias toward low complexity. Over residues 949 to 961 (SFKDMKTSQETKK) the composition is skewed to basic and acidic residues. Low complexity predominate over residues 977-997 (EKTSPTTKASPSTSPSESKAA). Composition is skewed to polar residues over residues 998–1023 (GNTS…STSV), 1031–1055 (TKNS…STES), and 1089–1103 (RSTT…GTSS).

This is an uncharacterized protein from Saccharomyces cerevisiae (strain ATCC 204508 / S288c) (Baker's yeast).